The primary structure comprises 432 residues: Hexane cyclase pydB (432 aa).

The N-terminal stretch at 1–20 is a signal peptide; that stretch reads MMHQSLGLGLVVFVAAPVVA. N-linked (GlcNAc...) asparagine glycans are attached at residues Asn-59, Asn-78, Asn-153, and Asn-308.

This sequence belongs to the Diels-Alderase family.

Its pathway is mycotoxin biosynthesis. Its function is as follows. Hexane cyclase; part of the gene cluster that mediates the biosynthesis of pyrrocidines, fungal natural products containing a macrocyclic para-cyclophane connected to a decahydrofluorene ring system that show potent antibiotic activities toward Gram-negative bacteria. Within the pathway, pydB functions synergistically with pydE, pydX and pydZ to form the cyclophane. The pathway begins with the PKS-NRPS pydA which, with the help of the trans-enoyl reductase pydC, synthesizes the polyketide-tyrosyl acyl thioester product which can be reductively off-loaded by the terminal reductase (R) domain in pydA. The alpha/beta hydrolase pydG is then required to catalyze the subsequent Knoevenagel condensation that affords the 3-pyrrolin-2-one ring, whereas the four proteins pydB, pydE, pydX and pydZ then function synergistically to form the cyclophane. PydB and the membrane-bound pydX and pydZ are lipid-binding proteins that can sequester and mold the pdyG product into the inverse S-shape. Binding of the medium chain reductase pydE to the complex would trigger the cascade oxidative cyclization. PydY is involved the Diels-Alder cycloaddition that forms the decahydrofluorene core. Additional non-enzymatic hydroxylation yields pyrrocidine A2 which can be further reduced into pyrrocidine B by an endogenous reductase. The protein is Hexane cyclase pydB of Acremonium sp.